A 463-amino-acid chain; its full sequence is Cytoplasmic tRNA 2-thiolation protein 2 (463 aa).

Belongs to the CTU2/NCS2 family.

The protein localises to the cytoplasm. Its pathway is tRNA modification; 5-methoxycarbonylmethyl-2-thiouridine-tRNA biosynthesis. Its function is as follows. Plays a central role in 2-thiolation of mcm(5)S(2)U at tRNA wobble positions of tRNA(Lys), tRNA(Glu) and tRNA(Gln). May act by forming a heterodimer with NCS6 that ligates sulfur from thiocarboxylated URM1 onto the uridine of tRNAs at wobble position. Prior mcm(5) tRNA modification by the elongator complex is required for 2-thiolation. May also be involved in protein urmylation. The polypeptide is Cytoplasmic tRNA 2-thiolation protein 2 (Kluyveromyces lactis (strain ATCC 8585 / CBS 2359 / DSM 70799 / NBRC 1267 / NRRL Y-1140 / WM37) (Yeast)).